We begin with the raw amino-acid sequence, 238 residues long: Probable transcriptional regulatory protein MGAS10750_Spy0264 (238 aa).

It belongs to the TACO1 family. YeeN subfamily.

It is found in the cytoplasm. This Streptococcus pyogenes serotype M4 (strain MGAS10750) protein is Probable transcriptional regulatory protein MGAS10750_Spy0264.